Reading from the N-terminus, the 1670-residue chain is Protein TASOR (1670 aa).

The interval 1–110 (MATAVETEAC…QIPRKSREKK (110 aa)) is disordered. Ala2 is modified (N-acetylalanine). Residues 67–78 (QSLSHEQPQDSS) are compositionally biased toward polar residues. The residue at position 344 (Ser344) is a Phosphoserine. A Glycyl lysine isopeptide (Lys-Gly) (interchain with G-Cter in SUMO2) cross-link involves residue Lys586. Phosphoserine is present on residues Ser633, Ser636, Ser673, and Ser800. Glycyl lysine isopeptide (Lys-Gly) (interchain with G-Cter in SUMO2) cross-links involve residues Lys823 and Lys832. The residue at position 843 (Ser843) is a Phosphoserine. A Glycyl lysine isopeptide (Lys-Gly) (interchain with G-Cter in SUMO2) cross-link involves residue Lys872. Residues 921 to 947 (TGGNARSPEDQLGKHGEKQTPGMKSPE) are disordered. Residues Ser927, Ser971, and Ser979 each carry the phosphoserine modification. Residues 927-938 (SPEDQLGKHGEK) show a composition bias toward basic and acidic residues. Residues Thr982 and Thr1049 each carry the phosphothreonine modification. The residue at position 1103 (Ser1103) is a Phosphoserine. The segment covering 1532 to 1545 (ETKGSRGTDQKKNT) has biased composition (basic and acidic residues). Disordered regions lie at residues 1532 to 1558 (ETKG…VQNS) and 1638 to 1670 (FLSA…SQEK). 2 stretches are compositionally biased toward polar residues: residues 1546 to 1558 (QIEL…VQNS) and 1659 to 1670 (KSDSSRPYSQEK). Position 1552 is a phosphoserine (Ser1552).

Belongs to the TASOR family. As to quaternary structure, component of the HUSH complex; at least composed of TASOR, PPHLN1 and MPHOSPH8. Interacts with MORC2; the interaction associateS MORC2 with the HUSH complex which recruits MORC2 to heterochromatic loci. Interacts with ZNF638; leading to recruitment of the HUSH complex to unintegrated retroviral DNA. Interacts with INPP5A, EML1, SV1L, GPSM2, ITGB3BP, CNTN1, ETFA, PSMD8, S100A10, MPHOSPH8, TMEM100, ALB, PARPBP, HCFC2, NCBP1 and SETDB1.

The protein resides in the nucleus. It localises to the chromosome. In terms of biological role, component of the HUSH complex, a multiprotein complex that mediates epigenetic repression. The HUSH complex is recruited to genomic loci rich in H3K9me3 and is required to maintain transcriptional silencing by promoting recruitment of SETDB1, a histone methyltransferase that mediates further deposition of H3K9me3, as well as MORC2. Also represses L1 retrotransposons in collaboration with MORC2 and, probably, SETDB1, the silencing is dependent of repressive epigenetic modifications, such as H3K9me3 mark. Silencing events often occur within introns of transcriptionally active genes, and lead to the down-regulation of host gene expression. The HUSH complex is also involved in the silencing of unintegrated retroviral DNA by being recruited by ZNF638: some part of the retroviral DNA formed immediately after infection remains unintegrated in the host genome and is transcriptionally repressed. Plays a crucial role in early embryonic development. Involved in the organization of spindle poles and spindle apparatus assembly during zygotic division. Plays an important role in maintaining epiblast fitness or potency. The protein is Protein TASOR of Homo sapiens (Human).